The following is a 282-amino-acid chain: Undecaprenyl-diphosphatase 1 (282 aa).

The next 8 helical transmembrane spans lie at 1–21 (MLLL…VLPL), 46–66 (GVAL…LYFW), 91–111 (AFLV…LAHF), 117–137 (SPGL…LGVI), 150–170 (MGGI…LPGV), 193–213 (FSML…GLDL), 226–246 (LIAA…MMAW), and 260–280 (VLLG…APFL).

It belongs to the UppP family.

It is found in the cell inner membrane. It catalyses the reaction di-trans,octa-cis-undecaprenyl diphosphate + H2O = di-trans,octa-cis-undecaprenyl phosphate + phosphate + H(+). Its function is as follows. Catalyzes the dephosphorylation of undecaprenyl diphosphate (UPP). Confers resistance to bacitracin. This chain is Undecaprenyl-diphosphatase 1, found in Rhodospirillum rubrum (strain ATCC 11170 / ATH 1.1.1 / DSM 467 / LMG 4362 / NCIMB 8255 / S1).